Consider the following 334-residue polypeptide: Aspartate carbamoyltransferase catalytic subunit (334 aa).

Positions 71 and 72 each coordinate carbamoyl phosphate. K99 is a binding site for L-aspartate. 3 residues coordinate carbamoyl phosphate: R121, H151, and Q154. Residues R184 and R239 each contribute to the L-aspartate site. Residues G280 and P281 each contribute to the carbamoyl phosphate site.

The protein belongs to the aspartate/ornithine carbamoyltransferase superfamily. ATCase family. Heterododecamer (2C3:3R2) of six catalytic PyrB chains organized as two trimers (C3), and six regulatory PyrI chains organized as three dimers (R2).

The catalysed reaction is carbamoyl phosphate + L-aspartate = N-carbamoyl-L-aspartate + phosphate + H(+). Its pathway is pyrimidine metabolism; UMP biosynthesis via de novo pathway; (S)-dihydroorotate from bicarbonate: step 2/3. Its function is as follows. Catalyzes the condensation of carbamoyl phosphate and aspartate to form carbamoyl aspartate and inorganic phosphate, the committed step in the de novo pyrimidine nucleotide biosynthesis pathway. The polypeptide is Aspartate carbamoyltransferase catalytic subunit (Pseudomonas putida (strain GB-1)).